A 400-amino-acid chain; its full sequence is Phosphoglycerate kinase (400 aa).

Substrate contacts are provided by residues 24-26 (DFN), Arg-39, 62-65 (HFGR), Arg-121, and Arg-154. ATP is bound by residues Lys-205, Gly-296, Glu-327, and 356–359 (GGDS).

This sequence belongs to the phosphoglycerate kinase family. Monomer.

The protein resides in the cytoplasm. It carries out the reaction (2R)-3-phosphoglycerate + ATP = (2R)-3-phospho-glyceroyl phosphate + ADP. It functions in the pathway carbohydrate degradation; glycolysis; pyruvate from D-glyceraldehyde 3-phosphate: step 2/5. In Rippkaea orientalis (strain PCC 8801 / RF-1) (Cyanothece sp. (strain PCC 8801)), this protein is Phosphoglycerate kinase.